The sequence spans 158 residues: D-aminoacyl-tRNA deacylase (158 aa).

A Gly-cisPro motif, important for rejection of L-amino acids motif is present at residues 138 to 139; sequence GP.

It belongs to the DTD family. Homodimer.

Its subcellular location is the cytoplasm. The catalysed reaction is glycyl-tRNA(Ala) + H2O = tRNA(Ala) + glycine + H(+). It catalyses the reaction a D-aminoacyl-tRNA + H2O = a tRNA + a D-alpha-amino acid + H(+). An aminoacyl-tRNA editing enzyme that deacylates mischarged D-aminoacyl-tRNAs. Hydrolyzes correctly charged, achiral, glycyl-tRNA(Gly). Deacylates mischarged endogenous and E.coli glycyl-tRNA(Ala), protecting cells against glycine mischarging by AlaRS. Acts via tRNA-based rather than protein-based catalysis; rejects L-amino acids rather than detecting D-amino acids in the active site. By recycling D-aminoacyl-tRNA to D-amino acids and free tRNA molecules, this enzyme counteracts the toxicity associated with the formation of D-aminoacyl-tRNA entities in vivo and helps enforce protein L-homochirality. The chain is D-aminoacyl-tRNA deacylase from Drosophila melanogaster (Fruit fly).